We begin with the raw amino-acid sequence, 65 residues long: MEGSKRRHDSRRLQQEQEQPRPRTPPSYEEIAKYGHSFNVKRFTNKEMCLKNDYPRIISYNPPPK.

Positions 1–10 (MEGSKRRHDS) are enriched in basic residues. The tract at residues 1 to 29 (MEGSKRRHDSRRLQQEQEQPRPRTPPSYE) is disordered. Positions 11–21 (RRLQQEQEQPR) are enriched in basic and acidic residues.

It belongs to the orthopoxvirus OPG052 family.

The polypeptide is Protein OPG052 (OPG052) (Homo sapiens (Human)).